Consider the following 639-residue polypeptide: UvrABC system protein C (639 aa).

The 78-residue stretch at 20–97 folds into the GIY-YIG domain; the sequence is ERSGVYRMFD…IKKFQPKFNI (78 aa). Residues 207 to 242 form the UVR domain; it reads KELQENLSRKMEELSSQMRFEEAAEIRDRIKALSYV.

It belongs to the UvrC family. Interacts with UvrB in an incision complex.

The protein localises to the cytoplasm. Its function is as follows. The UvrABC repair system catalyzes the recognition and processing of DNA lesions. UvrC both incises the 5' and 3' sides of the lesion. The N-terminal half is responsible for the 3' incision and the C-terminal half is responsible for the 5' incision. The sequence is that of UvrABC system protein C from Rickettsia peacockii (strain Rustic).